The chain runs to 304 residues: UDP-N-acetylenolpyruvoylglucosamine reductase (304 aa).

An FAD-binding PCMH-type domain is found at 33 to 198 (RVGGPVDILL…ITATFCFESG (166 aa)). Residue Arg177 is part of the active site. Ser227 acts as the Proton donor in catalysis. Glu297 is an active-site residue.

This sequence belongs to the MurB family. FAD serves as cofactor.

Its subcellular location is the cytoplasm. It catalyses the reaction UDP-N-acetyl-alpha-D-muramate + NADP(+) = UDP-N-acetyl-3-O-(1-carboxyvinyl)-alpha-D-glucosamine + NADPH + H(+). Its pathway is cell wall biogenesis; peptidoglycan biosynthesis. Its function is as follows. Cell wall formation. The chain is UDP-N-acetylenolpyruvoylglucosamine reductase from Clostridium botulinum (strain Alaska E43 / Type E3).